The sequence spans 205 residues: Urease accessory protein UreE (205 aa).

The disordered stretch occupies residues 171–205 (AHEAHPHAHSHAGGHGHVHSGHGHGGKHGEHDAES). The span at 177–196 (HAHSHAGGHGHVHSGHGHGG) shows a compositional bias: basic residues.

Belongs to the UreE family.

The protein resides in the cytoplasm. Involved in urease metallocenter assembly. Binds nickel. Probably functions as a nickel donor during metallocenter assembly. The sequence is that of Urease accessory protein UreE from Bordetella parapertussis (strain 12822 / ATCC BAA-587 / NCTC 13253).